A 147-amino-acid chain; its full sequence is Large ribosomal subunit protein uL15 (147 aa).

A compositionally biased stretch (basic and acidic residues) spans 1–20 (MTLRLNDLKPADGARTERTR). The interval 1–61 (MTLRLNDLKP…GFEGGQTPMQ (61 aa)) is disordered. A compositionally biased stretch (gly residues) spans 23 to 33 (RGIGSGLGKTA). Residues 34–47 (GRGHKGSFARKGGG) are compositionally biased toward basic residues.

It belongs to the universal ribosomal protein uL15 family. Part of the 50S ribosomal subunit.

Binds to the 23S rRNA. This is Large ribosomal subunit protein uL15 from Xanthomonas euvesicatoria pv. vesicatoria (strain 85-10) (Xanthomonas campestris pv. vesicatoria).